A 1701-amino-acid polypeptide reads, in one-letter code: Rho guanine nucleotide exchange factor TIAM2 (1701 aa).

4 disordered regions span residues 1–21 (MGNS…NTIT), 201–250 (SPTL…SSWY), 265–293 (GSFL…FNQS), and 389–417 (SLSR…DGLN). Residue glycine 2 is the site of N-myristoyl glycine attachment. Low complexity predominate over residues 238–248 (SKGSSLSSESS). The span at 397–413 (LQEPRSKEGSDYFDSRS) shows a compositional bias: basic and acidic residues. Residues 506 to 620 (VVRKAGWLFF…WVTAVHSACA (115 aa)) form the PH 1 domain. Residues 628 to 695 (GKEDTLRLLK…KFHMDLFRMR (68 aa)) are a coiled coil. Positions 810–881 (IQTYVHFQDN…YMQQQVYDEI (72 aa)) constitute an RBD domain. The region spanning 890–976 (DVQLTKTGSV…GLTLIARPPD (87 aa)) is the PDZ domain. Positions 1070 to 1092 (DSQANGMEGPRENQDPPPRSLAR) are disordered. The DH domain maps to 1099–1293 (RLRKVIQELV…EKVASHINEM (195 aa)). In terms of domain architecture, PH 2 spans 1347 to 1478 (DLELTVFVFK…EKTCKDRLVP (132 aa)). Disordered stretches follow at residues 1500-1556 (NSSS…GLAD) and 1568-1628 (LSDE…PKLV). Residues 1513–1527 (GTLLDSDEGSLSSGT) show a composition bias toward low complexity. Position 1583 is a phosphoserine (serine 1583). Residues 1596-1607 (RISEDPDVHPEA) are compositionally biased toward basic and acidic residues. Threonine 1648 is subject to Phosphothreonine.

Belongs to the TIAM family. In terms of assembly, interacts with MAP1A, MAP1B, PARP1 and YWHAE. Interacts with CD44, PARD3 and MAPK8IP2. In terms of processing, phosphorylated on serine and threonine residues. Phosphorylated on Thr-1648 by Rho-kinase. Its phosphorylation by Rho-kinase inhibits its guanine nucleotide exchange activity, its interaction with MAP1A, MAP1B, PARP1 and YWHAE and reduces its ability to promote neurite growth. Expressed in the occipital, frontal and temporal lobes, cerebellum, putamen and testis.

It localises to the cytoplasm. Its subcellular location is the cell projection. The protein resides in the lamellipodium. The protein localises to the filopodium. It is found in the growth cone. It localises to the neuron projection. Its subcellular location is the perikaryon. Its function is as follows. Modulates the activity of RHO-like proteins and connects extracellular signals to cytoskeletal activities. Acts as a GDP-dissociation stimulator protein that stimulates the GDP-GTP exchange activity of RHO-like GTPases and activates them. Mediates extracellular laminin signals to activate Rac1, contributing to neurite growth. Involved in lamellipodial formation and advancement of the growth cone of embryonic hippocampal neurons. Promotes migration of neurons in the cerebral cortex. When overexpressed, induces membrane ruffling accompanied by the accumulation of actin filaments along the altered plasma membrane. Activates specifically RAC1, but not CDC42 and RHOA. The polypeptide is Rho guanine nucleotide exchange factor TIAM2 (TIAM2) (Homo sapiens (Human)).